Reading from the N-terminus, the 393-residue chain is S-adenosylmethionine synthase (393 aa).

Glutamate 9 is a Mg(2+) binding site. Histidine 15 is an ATP binding site. Aspartate 17 serves as a coordination point for Mg(2+). Glutamate 43 is a K(+) binding site. Residues glutamate 56 and glutamine 99 each contribute to the L-methionine site. Residues 167–169 (DGK), 235–238 (SGRF), aspartate 246, 252–253 (RK), alanine 269, lysine 273, and lysine 277 contribute to the ATP site. Position 246 (aspartate 246) interacts with L-methionine. Lysine 277 serves as a coordination point for L-methionine.

Belongs to the AdoMet synthase family. Homotetramer; dimer of dimers. Mn(2+) is required as a cofactor. Mg(2+) serves as cofactor. Requires Co(2+) as cofactor. It depends on K(+) as a cofactor.

The protein localises to the cytoplasm. It carries out the reaction L-methionine + ATP + H2O = S-adenosyl-L-methionine + phosphate + diphosphate. It functions in the pathway amino-acid biosynthesis; S-adenosyl-L-methionine biosynthesis; S-adenosyl-L-methionine from L-methionine: step 1/1. Increased activity in the presence of 25 percent acetonitrile, methanol or dimethylformamide. Its function is as follows. Catalyzes the formation of S-adenosylmethionine from methionine and ATP. The protein is S-adenosylmethionine synthase of Acacia koa (Koa tree).